A 227-amino-acid polypeptide reads, in one-letter code: MAYPFQLGLQDATSPIMEELLHFHDHTLMIVFLISSLVLYIITLMLTTKLTHTSTMDAQEVETVWTILPAIILILIALPSLRILYMMDEINNPSLTVKTMGHQWYWSYEYTDYEDLNFDSYMIPTQELKPGELRLLEVDNRVVLPMEMTVRMLISSEDVLHSWAVPSLGLKTDAIPGRLNQTTLMAMRPGLYYGQCSEICGSNHSFMPIVLEMVPLSYFETWSALMV.

The Mitochondrial intermembrane segment spans residues 1-14 (MAYPFQLGLQDATS). A helical membrane pass occupies residues 15–45 (PIMEELLHFHDHTLMIVFLISSLVLYIITLM). Topologically, residues 46 to 59 (LTTKLTHTSTMDAQ) are mitochondrial matrix. A helical transmembrane segment spans residues 60–87 (EVETVWTILPAIILILIALPSLRILYMM). The Mitochondrial intermembrane segment spans residues 88–227 (DEINNPSLTV…YFETWSALMV (140 aa)). Residues H161, C196, E198, C200, H204, and M207 each coordinate Cu cation. E198 is a Mg(2+) binding site. Y218 carries the phosphotyrosine modification.

The protein belongs to the cytochrome c oxidase subunit 2 family. As to quaternary structure, component of the cytochrome c oxidase (complex IV, CIV), a multisubunit enzyme composed of 14 subunits. The complex is composed of a catalytic core of 3 subunits MT-CO1, MT-CO2 and MT-CO3, encoded in the mitochondrial DNA, and 11 supernumerary subunits COX4I, COX5A, COX5B, COX6A, COX6B, COX6C, COX7A, COX7B, COX7C, COX8 and NDUFA4, which are encoded in the nuclear genome. The complex exists as a monomer or a dimer and forms supercomplexes (SCs) in the inner mitochondrial membrane with NADH-ubiquinone oxidoreductase (complex I, CI) and ubiquinol-cytochrome c oxidoreductase (cytochrome b-c1 complex, complex III, CIII), resulting in different assemblies (supercomplex SCI(1)III(2)IV(1) and megacomplex MCI(2)III(2)IV(2)). Found in a complex with TMEM177, COA6, COX18, COX20, SCO1 and SCO2. Interacts with TMEM177 in a COX20-dependent manner. Interacts with COX20. Interacts with COX16. The cofactor is Cu cation.

The protein localises to the mitochondrion inner membrane. The catalysed reaction is 4 Fe(II)-[cytochrome c] + O2 + 8 H(+)(in) = 4 Fe(III)-[cytochrome c] + 2 H2O + 4 H(+)(out). In terms of biological role, component of the cytochrome c oxidase, the last enzyme in the mitochondrial electron transport chain which drives oxidative phosphorylation. The respiratory chain contains 3 multisubunit complexes succinate dehydrogenase (complex II, CII), ubiquinol-cytochrome c oxidoreductase (cytochrome b-c1 complex, complex III, CIII) and cytochrome c oxidase (complex IV, CIV), that cooperate to transfer electrons derived from NADH and succinate to molecular oxygen, creating an electrochemical gradient over the inner membrane that drives transmembrane transport and the ATP synthase. Cytochrome c oxidase is the component of the respiratory chain that catalyzes the reduction of oxygen to water. Electrons originating from reduced cytochrome c in the intermembrane space (IMS) are transferred via the dinuclear copper A center (CU(A)) of subunit 2 and heme A of subunit 1 to the active site in subunit 1, a binuclear center (BNC) formed by heme A3 and copper B (CU(B)). The BNC reduces molecular oxygen to 2 water molecules using 4 electrons from cytochrome c in the IMS and 4 protons from the mitochondrial matrix. This chain is Cytochrome c oxidase subunit 2 (MT-CO2), found in Vulpes macrotis (Kit fox).